The following is a 402-amino-acid chain: Acetylornithine aminotransferase (402 aa).

Pyridoxal 5'-phosphate contacts are provided by residues 106 to 107 and F132; that span reads GA. R135 contacts N(2)-acetyl-L-ornithine. 217 to 220 provides a ligand contact to pyridoxal 5'-phosphate; it reads DEVQ. K247 carries the N6-(pyridoxal phosphate)lysine modification. T275 lines the N(2)-acetyl-L-ornithine pocket. T276 is a binding site for pyridoxal 5'-phosphate.

It belongs to the class-III pyridoxal-phosphate-dependent aminotransferase family. ArgD subfamily. Homodimer. It depends on pyridoxal 5'-phosphate as a cofactor.

The protein localises to the cytoplasm. It carries out the reaction N(2)-acetyl-L-ornithine + 2-oxoglutarate = N-acetyl-L-glutamate 5-semialdehyde + L-glutamate. Its pathway is amino-acid biosynthesis; L-arginine biosynthesis; N(2)-acetyl-L-ornithine from L-glutamate: step 4/4. This is Acetylornithine aminotransferase from Streptomyces coelicolor (strain ATCC BAA-471 / A3(2) / M145).